The chain runs to 357 residues: MRVLVAMSGGVDSSVAAARMVAAGHDVVGVHLALSSAPGTLRTGSRGCCSKEDAGDARRVADVLGIPFYVWDFADRFKEDVIDDFVESYARGETPNPCVRCNERIKFSALASRALALGFDALATGHYARLADGRLRRAVDHDKDQSYVLAVLTAEQLRHAVFPIGDTPKAQIREEAARLGLAVADKADSHDICFIPSGDTKAFLGARIGVRRGNVVDAAGTVLAEHDGVHGFTIGQRKGLGIPGPGPDGSPRYVTGIDAQTGTVHVGDVADLEVTSLQGDAPVFTSGVAPTGPLECVVQVRAHGGVADAVAELRGDTLEVSLRTPLRGVAPGQTLVLYRRDPAGDEVLASATIRATH.

Residues 6–13 (AMSGGVDS) and L32 each bind ATP. Catalysis depends on C101, which acts as the Nucleophile. The cysteines at positions 101 and 193 are disulfide-linked. G125 lines the ATP pocket. The interaction with tRNA stretch occupies residues 143 to 145 (KDQ). Catalysis depends on C193, which acts as the Cysteine persulfide intermediate.

It belongs to the MnmA/TRMU family.

Its subcellular location is the cytoplasm. The catalysed reaction is S-sulfanyl-L-cysteinyl-[protein] + uridine(34) in tRNA + AH2 + ATP = 2-thiouridine(34) in tRNA + L-cysteinyl-[protein] + A + AMP + diphosphate + H(+). Its function is as follows. Catalyzes the 2-thiolation of uridine at the wobble position (U34) of tRNA, leading to the formation of s(2)U34. The chain is tRNA-specific 2-thiouridylase MnmA from Mycolicibacterium gilvum (strain PYR-GCK) (Mycobacterium gilvum (strain PYR-GCK)).